The following is a 273-amino-acid chain: NADPH-dependent 7-cyano-7-deazaguanine reductase (273 aa).

80–82 (IES) is a binding site for substrate. Residue 82-83 (SK) participates in NADPH binding. Cys-180 (thioimide intermediate) is an active-site residue. Asp-187 acts as the Proton donor in catalysis. A substrate-binding site is contributed by 219–220 (HE). An NADPH-binding site is contributed by 248 to 249 (RG).

Belongs to the GTP cyclohydrolase I family. QueF type 2 subfamily. Homodimer.

It is found in the cytoplasm. The catalysed reaction is 7-aminomethyl-7-carbaguanine + 2 NADP(+) = 7-cyano-7-deazaguanine + 2 NADPH + 3 H(+). Its pathway is tRNA modification; tRNA-queuosine biosynthesis. Catalyzes the NADPH-dependent reduction of 7-cyano-7-deazaguanine (preQ0) to 7-aminomethyl-7-deazaguanine (preQ1). This chain is NADPH-dependent 7-cyano-7-deazaguanine reductase, found in Bordetella avium (strain 197N).